The sequence spans 151 residues: Transcriptional repressor NrdR (151 aa).

The segment at 3-34 (CPKCGSLNDKVLETRQSKEGVVIKRRRECLNC) is a zinc-finger region. An ATP-cone domain is found at 49-139 (IEVIKKNNTV…VFDGFEDIKD (91 aa)).

This sequence belongs to the NrdR family. It depends on Zn(2+) as a cofactor.

Negatively regulates transcription of bacterial ribonucleotide reductase nrd genes and operons by binding to NrdR-boxes. This Sulfurihydrogenibium sp. (strain YO3AOP1) protein is Transcriptional repressor NrdR.